The following is a 294-amino-acid chain: Autophagy protein 5 (294 aa).

A Glycyl lysine isopeptide (Lys-Gly) (interchain with G-Cter in ATG12) cross-link involves residue lysine 149.

It belongs to the ATG5 family. In terms of assembly, conjugated with ATG12. The ATG5-ATG12 conjugate forms a complex with several units of ATG16. The ATG12-ATG5 conjugate also associates with ATG3. In terms of processing, conjugated to ATG12; which is essential for autophagy. Conjugation with ATG12 involves ATG7 as an E1-like activating enzyme and ATG10 as an E2-like conjugating enzyme.

It is found in the preautophagosomal structure membrane. In terms of biological role, involved in cytoplasm to vacuole transport (Cvt) and autophagic vesicle formation. Autophagy is essential for maintenance of amino acid levels and protein synthesis under nitrogen starvation. Required for selective autophagic degradation of the nucleus (nucleophagy). Also required for mitophagy, which eliminates defective or superfluous mitochondria in order to fulfill cellular energy requirements and prevent excess ROS production. Conjugation with ATG12, through a ubiquitin-like conjugating system involving ATG7 as an E1-like activating enzyme and ATG10 as an E2-like conjugating enzyme, is essential for its function. The ATG12-ATG5 conjugate acts as an E3-like enzyme which is required for lipidation of ATG8 and ATG8 association to the vesicle membranes. ATG12-ATG5 rearranges the ATG3 catalytic center and enhances its E2 activity. Plays a role in the regulation of filamentous growth and chronological longevity. The sequence is that of Autophagy protein 5 (ATG5) from Saccharomyces cerevisiae (strain YJM789) (Baker's yeast).